The sequence spans 262 residues: MKAVVLTLAVLFLTGSQARHFWQQDEPQSSWDRVKDFATVYVEAIKDSGRDYVAQFEASALGKQLNLKLLDNWDTLASTLSKVREQLGPVTQEFWDNLEKETAALRQEMNKDLEEVKQKVQPYLDEFQRKWHEEVEIYRQKVAPLGEEFREGARQKVQELQDRLSPLAQELRDRARAHVEKQLAPYSDDLRQRLTARLEALKEGGGSLAEYHAKATEQLKALGEKAKPALEDLRQGLMPVLESLKVSILAAIDEASKKLNAQ.

The signal sequence occupies residues 1–18; that stretch reads MKAVVLTLAVLFLTGSQA. 2 repeat units span residues 67–88 and 89–110. The 10 X approximate tandem repeats stretch occupies residues 67–262; sequence LKLLDNWDTL…DEASKKLNAQ (196 aa). Met-109 is modified (methionine sulfoxide). The 3; half-length repeat unit spans residues 111–121; the sequence is KDLEEVKQKVQ. 5 tandem repeats follow at residues 122-142, 144-165, 166-184, 185-206, and 207-227. The 9; half-length repeat unit spans residues 228–238; sequence PALEDLRQGLM. Methionine sulfoxide is present on Met-238. Repeat unit 10 spans residues 239-262; that stretch reads PVLESLKVSILAAIDEASKKLNAQ.

Belongs to the apolipoprotein A1/A4/E family. Homodimer. Interacts with APOA1BP and CLU. Component of a sperm activating protein complex (SPAP), consisting of APOA1, an immunoglobulin heavy chain, an immunoglobulin light chain and albumin. Interacts with NDRG1. Interacts with SCGB3A2. Interacts with NAXE and YJEFN3. Glycosylated. In terms of processing, palmitoylated. Post-translationally, phosphorylation sites are present in the extracellular medium. Major protein of plasma HDL, also found in chylomicrons.

It localises to the secreted. Participates in the reverse transport of cholesterol from tissues to the liver for excretion by promoting cholesterol efflux from tissues and by acting as a cofactor for the lecithin cholesterol acyltransferase (LCAT). As part of the SPAP complex, activates spermatozoa motility. This Pantholops hodgsonii (Chiru) protein is Apolipoprotein A-I (APOA1).